The primary structure comprises 350 residues: Protein Wnt-2 (350 aa).

The N-terminal stretch at Met1–Ala25 is a signal peptide. 11 disulfides stabilise this stretch: Cys74/Cys85, Cys125/Cys133, Cys135/Cys155, Cys204/Cys218, Cys206/Cys213, Cys276/Cys307, Cys292/Cys302, Cys306/Cys346, Cys322/Cys337, Cys324/Cys334, and Cys329/Cys330. The N-linked (GlcNAc...) asparagine glycan is linked to Asn132. Residue Ser210 is the site of O-palmitoleoyl serine; by PORCN attachment. Asn293 carries N-linked (GlcNAc...) asparagine glycosylation.

This sequence belongs to the Wnt family. In terms of processing, palmitoleoylation is required for efficient binding to frizzled receptors. Depalmitoleoylation leads to Wnt signaling pathway inhibition.

It localises to the secreted. It is found in the extracellular space. The protein localises to the extracellular matrix. In terms of biological role, ligand for members of the frizzled family of seven transmembrane receptors. Functions in the canonical Wnt signaling pathway that results in activation of transcription factors of the TCF/LEF family. The protein is Protein Wnt-2 (wnt2) of Danio rerio (Zebrafish).